A 414-amino-acid polypeptide reads, in one-letter code: TYYTPEYQTKDTDILAAFRMTPQPGVPAEEAGAAVAAESSTGTWTTVWTDGLTSLDRYKGRCYDIEPVAGEENQYIAYVAYPLDLFEEGSVTNMLTSIVGNVFGFKALRALRLEDLRIPPAYSKTFIGPPHGIQVERDKLNKYGRPLLGCTIKPKLGLSAKNYGRAVYECLRGGLDFTKDDENVNSQPFMRWRDRFLFVAEALFKAQAETGEIKGHYLNATAGTCEEMMKRAVFARELGAPIVMHDYLTGGFTANTSLAYYCRDNGLLLHIHRAMHAVIDRQRNHGIHFRVLAKALRMSGGDHIHAGTVVGKLEGEREVTLGFVDLLRDDYIEKDRSRGIYFTQDWVSMPGVLPVASGGIHVWHMPALTEIFGDDSVLQFGGGTLGHPWGNAPGAVANRVASEACVQALNEGLR.

Substrate is bound by residues asparagine 101 and threonine 151. Catalysis depends on lysine 153, which acts as the Proton acceptor. Residue lysine 155 participates in substrate binding. The Mg(2+) site is built by lysine 179, aspartate 181, and glutamate 182. The residue at position 179 (lysine 179) is an N6-carboxylysine. Catalysis depends on histidine 272, which acts as the Proton acceptor. Substrate is bound by residues arginine 273, histidine 305, and serine 357.

This sequence belongs to the RuBisCO large chain family. Type I subfamily. In terms of assembly, heterohexadecamer of 8 large chains and 8 small chains; disulfide-linked. The disulfide link is formed within the large subunit homodimers. Requires Mg(2+) as cofactor. In terms of processing, the disulfide bond which can form in the large chain dimeric partners within the hexadecamer appears to be associated with oxidative stress and protein turnover.

It is found in the plastid. It localises to the chloroplast. The catalysed reaction is 2 (2R)-3-phosphoglycerate + 2 H(+) = D-ribulose 1,5-bisphosphate + CO2 + H2O. It carries out the reaction D-ribulose 1,5-bisphosphate + O2 = 2-phosphoglycolate + (2R)-3-phosphoglycerate + 2 H(+). In terms of biological role, ruBisCO catalyzes two reactions: the carboxylation of D-ribulose 1,5-bisphosphate, the primary event in carbon dioxide fixation, as well as the oxidative fragmentation of the pentose substrate in the photorespiration process. Both reactions occur simultaneously and in competition at the same active site. This is Ribulose bisphosphate carboxylase large chain (rbcL) from Onychium japonicum (Japanese claw fern).